Here is a 180-residue protein sequence, read N- to C-terminus: Nucleoside triphosphate/diphosphate phosphatase (180 aa).

Arginine 26 functions as the Proton donor in the catalytic mechanism. The Mg(2+) site is built by asparagine 90, aspartate 106, aspartate 108, aspartate 110, aspartate 123, and glutamate 126.

This sequence belongs to the Ntdp family. The cofactor is Mg(2+).

The catalysed reaction is a ribonucleoside 5'-triphosphate + H2O = a ribonucleoside 5'-diphosphate + phosphate + H(+). It catalyses the reaction a ribonucleoside 5'-diphosphate + H2O = a ribonucleoside 5'-phosphate + phosphate + H(+). In terms of biological role, has nucleoside phosphatase activity towards nucleoside triphosphates and nucleoside diphosphates. The chain is Nucleoside triphosphate/diphosphate phosphatase from Staphylococcus aureus (strain Mu3 / ATCC 700698).